The primary structure comprises 486 residues: Glycogen synthase (486 aa).

Lys-15 serves as a coordination point for ADP-alpha-D-glucose.

The protein belongs to the glycosyltransferase 1 family. Bacterial/plant glycogen synthase subfamily.

The enzyme catalyses [(1-&gt;4)-alpha-D-glucosyl](n) + ADP-alpha-D-glucose = [(1-&gt;4)-alpha-D-glucosyl](n+1) + ADP + H(+). It participates in glycan biosynthesis; glycogen biosynthesis. In terms of biological role, synthesizes alpha-1,4-glucan chains using ADP-glucose. The chain is Glycogen synthase from Pseudothermotoga lettingae (strain ATCC BAA-301 / DSM 14385 / NBRC 107922 / TMO) (Thermotoga lettingae).